A 53-amino-acid chain; its full sequence is Rubredoxin 3 (53 aa).

Positions 1–53 (MQKWVCVPCGYEYDPADGDPENGIEPGTAFEDLPEDWVCPVCGVDKSFFEPVS) constitute a Rubredoxin-like domain. Fe cation is bound by residues Cys6, Cys9, Cys39, and Cys42.

Belongs to the rubredoxin family. As to quaternary structure, monomer. Requires Fe(3+) as cofactor.

In terms of biological role, functions as an electron acceptor for pyruvate ferredoxin oxidoreductase (PFOR). The polypeptide is Rubredoxin 3 (rub3) (Chlorobaculum tepidum (strain ATCC 49652 / DSM 12025 / NBRC 103806 / TLS) (Chlorobium tepidum)).